We begin with the raw amino-acid sequence, 765 residues long: 5-methyltetrahydropteroyltriglutamate--homocysteine methyltransferase (765 aa).

5-methyltetrahydropteroyltri-L-glutamate-binding positions include 18–21 and K114; that span reads REWK. L-homocysteine is bound by residues 437–439 and E490; that span reads IGS. Residues 437–439 and E490 each bind L-methionine; that span reads IGS. W567 is a binding site for 5-methyltetrahydropteroyltri-L-glutamate. D605 provides a ligand contact to L-homocysteine. D605 serves as a coordination point for L-methionine. A 5-methyltetrahydropteroyltri-L-glutamate-binding site is contributed by E611. H647, C649, and E671 together coordinate Zn(2+). The Proton donor role is filled by H700. C732 provides a ligand contact to Zn(2+).

Belongs to the vitamin-B12 independent methionine synthase family. The cofactor is Zn(2+).

It catalyses the reaction 5-methyltetrahydropteroyltri-L-glutamate + L-homocysteine = tetrahydropteroyltri-L-glutamate + L-methionine. The protein operates within amino-acid biosynthesis; L-methionine biosynthesis via de novo pathway; L-methionine from L-homocysteine (MetE route): step 1/1. Catalyzes the transfer of a methyl group from 5-methyltetrahydrofolate to homocysteine resulting in methionine formation. The chain is 5-methyltetrahydropteroyltriglutamate--homocysteine methyltransferase from Listeria monocytogenes serotype 4b (strain F2365).